Consider the following 384-residue polypeptide: 8-amino-7-oxononanoate synthase (384 aa).

A substrate-binding site is contributed by arginine 21. Glycine 108–phenylalanine 109 contributes to the pyridoxal 5'-phosphate binding site. Histidine 133 contributes to the substrate binding site. Positions 179, 207, and 233 each coordinate pyridoxal 5'-phosphate. An N6-(pyridoxal phosphate)lysine modification is found at lysine 236. Threonine 352 is a substrate binding site.

The protein belongs to the class-II pyridoxal-phosphate-dependent aminotransferase family. BioF subfamily. In terms of assembly, homodimer. It depends on pyridoxal 5'-phosphate as a cofactor.

The enzyme catalyses 6-carboxyhexanoyl-[ACP] + L-alanine + H(+) = (8S)-8-amino-7-oxononanoate + holo-[ACP] + CO2. It participates in cofactor biosynthesis; biotin biosynthesis. Functionally, catalyzes the decarboxylative condensation of pimeloyl-[acyl-carrier protein] and L-alanine to produce 8-amino-7-oxononanoate (AON), [acyl-carrier protein], and carbon dioxide. The protein is 8-amino-7-oxononanoate synthase of Escherichia coli (strain SE11).